A 1025-amino-acid polypeptide reads, in one-letter code: Multidrug resistance protein MdtC (1025 aa).

The next 12 membrane-spanning stretches (helical) occupy residues 3 to 23 (FFAL…AITL), 333 to 353 (EVEQ…FLFL), 360 to 380 (IIPA…MYLC), 387 to 407 (LSLM…IVVL), 431 to 451 (VGFT…PLLL), 463 to 483 (FAVT…TLTP), 528 to 548 (LVGV…ISIP), 853 to 873 (VILI…LYES), 875 to 895 (VHPL…LLAL), 897 to 917 (LFNA…IGIV), 953 to 973 (PIMM…LSGG), and 984 to 1004 (ITIV…TPVV).

Belongs to the resistance-nodulation-cell division (RND) (TC 2.A.6) family. MdtC subfamily. Part of a tripartite efflux system composed of MdtA, MdtB and MdtC. MdtC forms a heteromultimer with MdtB.

Its subcellular location is the cell inner membrane. The polypeptide is Multidrug resistance protein MdtC (Shigella sonnei (strain Ss046)).